The chain runs to 640 residues: Glutamyl-tRNA(Gln) amidotransferase subunit E (640 aa).

The protein belongs to the GatB/GatE family. GatE subfamily. As to quaternary structure, heterodimer of GatD and GatE.

It catalyses the reaction L-glutamyl-tRNA(Gln) + L-glutamine + ATP + H2O = L-glutaminyl-tRNA(Gln) + L-glutamate + ADP + phosphate + H(+). In terms of biological role, allows the formation of correctly charged Gln-tRNA(Gln) through the transamidation of misacylated Glu-tRNA(Gln) in organisms which lack glutaminyl-tRNA synthetase. The reaction takes place in the presence of glutamine and ATP through an activated gamma-phospho-Glu-tRNA(Gln). The GatDE system is specific for glutamate and does not act on aspartate. This is Glutamyl-tRNA(Gln) amidotransferase subunit E from Methanopyrus kandleri (strain AV19 / DSM 6324 / JCM 9639 / NBRC 100938).